A 139-amino-acid polypeptide reads, in one-letter code: Plasmid stability protein StbB (139 aa).

In terms of domain architecture, PINc spans 2–136 (ILLDTNVISE…EAAGLNVINP (135 aa)). The Mg(2+) site is built by D5 and D104.

The protein belongs to the PINc/VapC protein family. It depends on Mg(2+) as a cofactor.

Functionally, toxic component of a type II toxin-antitoxin (TA) system. An RNase. Involved in plasmid stability. The polypeptide is Plasmid stability protein StbB (stbB) (Pseudomonas syringae pv. tomato (strain ATCC BAA-871 / DC3000)).